Reading from the N-terminus, the 253-residue chain is 28 kDa inner dynein arm light chain, axonemal (253 aa).

Residues 19–44 (TSKDKGKGAKGTPGKKGALPPVEQKP) are disordered. Residues 160 to 239 (IRKALQTEQG…LKQQLETFLV (80 aa)) are a coiled coil.

The protein belongs to the inner dynein arm light chain family.

The protein localises to the cytoplasm. It localises to the cytoskeleton. Its subcellular location is the flagellum axoneme. Its function is as follows. Plays a dynamic role in flagellar motility. May be necessary for stable assembly of a subset of inner dynein arms or for the binding of these arms to the outer doublet microtubules of the axoneme. The polypeptide is 28 kDa inner dynein arm light chain, axonemal (IDA4) (Chlamydomonas reinhardtii (Chlamydomonas smithii)).